Consider the following 361-residue polypeptide: S-adenosylmethionine:tRNA ribosyltransferase-isomerase (361 aa).

The protein belongs to the QueA family. As to quaternary structure, monomer.

Its subcellular location is the cytoplasm. It catalyses the reaction 7-aminomethyl-7-carbaguanosine(34) in tRNA + S-adenosyl-L-methionine = epoxyqueuosine(34) in tRNA + adenine + L-methionine + 2 H(+). The protein operates within tRNA modification; tRNA-queuosine biosynthesis. Transfers and isomerizes the ribose moiety from AdoMet to the 7-aminomethyl group of 7-deazaguanine (preQ1-tRNA) to give epoxyqueuosine (oQ-tRNA). The protein is S-adenosylmethionine:tRNA ribosyltransferase-isomerase of Glaesserella parasuis serovar 5 (strain SH0165) (Haemophilus parasuis).